We begin with the raw amino-acid sequence, 29 residues long: MNLVDIAILILKLIVAALQLLDAVLKYLK.

The helical transmembrane segment at I6–L28 threads the bilayer.

The protein resides in the cell inner membrane. Its function is as follows. Toxic component of a type I toxin-antitoxin (TA) system. Overexpression causes cessation of growth, induces stress-response, a number of membrane protein genes, and leads to cell death. Inhibits ATP synthesis, ATP levels drop drastically quickly after induction. Part of the programmed response to DNA damage; damage leads to increased accumulation of the protein which slows or stops bacterial growth, probably allowing DNA repair before cells continue to grow. The protein is Small toxic protein TisB (tisB) of Escherichia coli (strain K12).